The following is a 196-amino-acid chain: Glycerol-3-phosphate acyltransferase (196 aa).

4 helical membrane passes run 5 to 25, 70 to 90, 111 to 131, and 152 to 172; these read GLIA…MILT, VVIA…LGAF, IGVL…IWLL, and LLLW…LTVL.

This sequence belongs to the PlsY family. In terms of assembly, probably interacts with PlsX.

It localises to the cell inner membrane. It catalyses the reaction an acyl phosphate + sn-glycerol 3-phosphate = a 1-acyl-sn-glycero-3-phosphate + phosphate. It functions in the pathway lipid metabolism; phospholipid metabolism. Its function is as follows. Catalyzes the transfer of an acyl group from acyl-phosphate (acyl-PO(4)) to glycerol-3-phosphate (G3P) to form lysophosphatidic acid (LPA). This enzyme utilizes acyl-phosphate as fatty acyl donor, but not acyl-CoA or acyl-ACP. The polypeptide is Glycerol-3-phosphate acyltransferase (Nitrobacter winogradskyi (strain ATCC 25391 / DSM 10237 / CIP 104748 / NCIMB 11846 / Nb-255)).